The chain runs to 339 residues: Protein pelota homolog (339 aa).

Belongs to the eukaryotic release factor 1 family. Pelota subfamily. Monomer. Requires a divalent metal cation as cofactor.

The protein localises to the cytoplasm. Its function is as follows. May function in recognizing stalled ribosomes, interact with stem-loop structures in stalled mRNA molecules, and effect endonucleolytic cleavage of the mRNA. May play a role in the release non-functional ribosomes and degradation of damaged mRNAs. Has endoribonuclease activity. This chain is Protein pelota homolog (pelA), found in Thermoplasma acidophilum (strain ATCC 25905 / DSM 1728 / JCM 9062 / NBRC 15155 / AMRC-C165).